We begin with the raw amino-acid sequence, 487 residues long: Probable cobyric acid synthase (487 aa).

The 186-residue stretch at Leu246–Ala431 folds into the GATase cobBQ-type domain. The active-site Nucleophile is the Cys325. Residue His423 is part of the active site.

The protein belongs to the CobB/CobQ family. CobQ subfamily.

It participates in cofactor biosynthesis; adenosylcobalamin biosynthesis. Catalyzes amidations at positions B, D, E, and G on adenosylcobyrinic A,C-diamide. NH(2) groups are provided by glutamine, and one molecule of ATP is hydrogenolyzed for each amidation. This Methanosphaerula palustris (strain ATCC BAA-1556 / DSM 19958 / E1-9c) protein is Probable cobyric acid synthase.